Reading from the N-terminus, the 137-residue chain is NADH-quinone oxidoreductase subunit A 2 (137 aa).

3 helical membrane passes run 12 to 32 (WGFA…LGVS), 66 to 86 (FYLV…LFAW), and 95 to 115 (WAGL…LVYL).

The protein belongs to the complex I subunit 3 family. NDH-1 is composed of 13 different subunits. Subunits NuoA, H, J, K, L, M, N constitute the membrane sector of the complex.

The protein resides in the cell inner membrane. It carries out the reaction a quinone + NADH + 5 H(+)(in) = a quinol + NAD(+) + 4 H(+)(out). NDH-1 shuttles electrons from NADH, via FMN and iron-sulfur (Fe-S) centers, to quinones in the respiratory chain. The immediate electron acceptor for the enzyme in this species is believed to be ubiquinone. Couples the redox reaction to proton translocation (for every two electrons transferred, four hydrogen ions are translocated across the cytoplasmic membrane), and thus conserves the redox energy in a proton gradient. In Pseudomonas aeruginosa (strain ATCC 15692 / DSM 22644 / CIP 104116 / JCM 14847 / LMG 12228 / 1C / PRS 101 / PAO1), this protein is NADH-quinone oxidoreductase subunit A 2.